We begin with the raw amino-acid sequence, 357 residues long: DNA integrity scanning protein DisA (357 aa).

In terms of domain architecture, DAC spans 8-146 (VKSMINILQL…GNLRYTLKDI (139 aa)). ATP is bound by residues Gly-75, Leu-93, and 106 to 110 (MRHRT).

It belongs to the DisA family. Homooctamer. The cofactor is Mg(2+).

It catalyses the reaction 2 ATP = 3',3'-c-di-AMP + 2 diphosphate. Functionally, participates in a DNA-damage check-point that is active prior to asymmetric division when DNA is damaged. DisA forms globular foci that rapidly scan along the chromosomes during sporulation, searching for lesions. When a lesion is present, DisA pauses at the lesion site. This triggers a cellular response that culminates in a temporary block in sporulation initiation. Its function is as follows. Also has diadenylate cyclase activity, catalyzing the condensation of 2 ATP molecules into cyclic di-AMP (c-di-AMP). c-di-AMP acts as a signaling molecule that couples DNA integrity with progression of sporulation. The rise in c-di-AMP level generated by DisA while scanning the chromosome, operates as a positive signal that advances sporulation; upon encountering a lesion, the DisA focus arrests at the damaged site and halts c-di-AMP synthesis. The chain is DNA integrity scanning protein DisA from Bacillus anthracis (strain CDC 684 / NRRL 3495).